Consider the following 404-residue polypeptide: Ribosomal RNA large subunit methyltransferase F (404 aa).

Basic residues-rich tracts occupy residues 1-10 and 18-29; these read MTKHSQKQNR and QTRRKKPAGKLK. Disordered stretches follow at residues 1-54, 156-177, and 289-308; these read MTKH…HERN, GTRQNVPYASKPESSAPKQRYK, and RAAKGHKPEPAASKAKPDAN. A compositionally biased stretch (basic and acidic residues) spans 30–54; it reads AKSEAKLDTRGKPETTEKKGLHERN. The segment covering 157–172 has biased composition (polar residues); sequence TRQNVPYASKPESSAP.

It belongs to the methyltransferase superfamily. METTL16/RlmF family.

The protein resides in the cytoplasm. The enzyme catalyses adenosine(1618) in 23S rRNA + S-adenosyl-L-methionine = N(6)-methyladenosine(1618) in 23S rRNA + S-adenosyl-L-homocysteine + H(+). Functionally, specifically methylates the adenine in position 1618 of 23S rRNA. The polypeptide is Ribosomal RNA large subunit methyltransferase F (Shewanella sediminis (strain HAW-EB3)).